Here is a 558-residue protein sequence, read N- to C-terminus: Phosphatidylserine lipase ABHD16A (558 aa).

2 helical membrane-spanning segments follow: residues isoleucine 60–phenylalanine 80 and valine 93–leucine 113. Residues arginine 114–leucine 558 are Cytoplasmic-facing. Positions leucine 281–histidine 406 constitute an AB hydrolase-1 domain. Active-site charge relay system residues include serine 355, aspartate 430, and histidine 507.

The protein belongs to the AB hydrolase superfamily. ABHD16 family.

The protein resides in the membrane. The catalysed reaction is 1-heptadecanoyl-2-(5Z,8Z,11Z,14Z-eicosatetraenoyl)-sn-glycero-3-phosphoserine + H2O = 1-heptadecanoyl-sn-glycero-3-phosphoserine + (5Z,8Z,11Z,14Z)-eicosatetraenoate + H(+). It carries out the reaction 1-hexadecanoyl-2-(9Z-octadecenoyl)-sn-glycero-3-phospho-L-serine + H2O = 1-hexadecanoyl-sn-glycero-3-phospho-L-serine + (9Z)-octadecenoate + H(+). The enzyme catalyses 1-octadecanoyl-2-(9Z,12Z-octadecadienoyl)-sn-glycero-3-phosphoserine + H2O = 1-octadecanoyl-sn-glycero-3-phosphoserine + (9Z,12Z)-octadecadienoate + H(+). It catalyses the reaction 1-heptadecanoyl-2-(5Z,8Z,11Z,14Z-eicosatetraenoyl)-sn-glycero-3-phosphocholine + H2O = 1-heptadecanoyl-sn-glycero-3-phosphocholine + (5Z,8Z,11Z,14Z)-eicosatetraenoate + H(+). The catalysed reaction is 1-hexadecanoyl-2-(9Z-octadecenoyl)-sn-glycero-3-phosphoglycerol + H2O = 1-hexadecanoyl-sn-glycero-3-phosphoglycerol + (9Z)-octadecenoate + H(+). It carries out the reaction 1-hexadecanoyl-2-(9Z-octadecenoyl)-sn-glycero-3-phospho-(1D-myo-inositol) + H2O = 1-hexadecanoyl-sn-glycero-3-phospho-(1D-myo-inositol) + (9Z)-octadecenoate + H(+). The enzyme catalyses 1-heptadecanoyl-2-(5Z,8Z,11Z,14Z-eicosatetraenoyl)-sn-glycero-3-phosphoethanolamine + H2O = 1-heptadecanoyl-sn-glycero-3-phosphoethanolamine + (5Z,8Z,11Z,14Z)-eicosatetraenoate + H(+). It catalyses the reaction 1-hexadecanoyl-2-(9Z-octadecenoyl)-sn-glycero-3-phospho-(1'-sn-glycerol) + H2O = 1-hexadecanoyl-sn-glycero-3-phospho-(1'-sn-glycerol) + (9Z)-octadecenoate + H(+). The catalysed reaction is Hydrolyzes glycerol monoesters of long-chain fatty acids.. It carries out the reaction 1-tetradecanoylglycerol + H2O = tetradecanoate + glycerol + H(+). The enzyme catalyses 2-hexadecanoylglycerol + H2O = glycerol + hexadecanoate + H(+). It catalyses the reaction 1-(9Z-octadecenoyl)-glycerol + H2O = glycerol + (9Z)-octadecenoate + H(+). The catalysed reaction is 2-(9Z-octadecenoyl)-glycerol + H2O = glycerol + (9Z)-octadecenoate + H(+). It carries out the reaction 2-(9Z,12Z-octadecadienoyl)-glycerol + H2O = (9Z,12Z)-octadecadienoate + glycerol + H(+). The enzyme catalyses 1-(5Z,8Z,11Z,14Z-eicosatetraenoyl)-glycerol + H2O = glycerol + (5Z,8Z,11Z,14Z)-eicosatetraenoate + H(+). It catalyses the reaction 2-(5Z,8Z,11Z,14Z-eicosatetraenoyl)-glycerol + H2O = glycerol + (5Z,8Z,11Z,14Z)-eicosatetraenoate + H(+). The catalysed reaction is prostaglandin D2-1-glycerol ester + H2O = prostaglandin D2 + glycerol + H(+). It carries out the reaction 2-glyceryl-15-deoxy-Delta(12,14)-prostaglandin J2 + H2O = 15-deoxy-Delta(12,14)-prostaglandin J2 + glycerol + H(+). The enzyme catalyses 1-(9Z,12Z-octadecadienoyl)-glycerol + H2O = (9Z,12Z)-octadecadienoate + glycerol + H(+). Specifically inhibited by alpha-alkylidene-beta-lactone KC01 ((Z)-6-(2-Oxo-4-tridecyloxetan-3-ylidene)hexanamide). In terms of biological role, phosphatidylserine (PS) lipase that mediates the hydrolysis of phosphatidylserine to generate lysophosphatidylserine (LPS). LPS constitutes a class of signaling lipids that regulates immunological and neurological processes. Has no activity towards diacylglycerol, triacylglycerol or lysophosphatidylserine lipase. Also has monoacylglycerol lipase activity, with preference for 1-(9Z,12Z-octadecadienoyl)-glycerol (1-LG) and 2-glyceryl-15-deoxy-Delta(12,14)-prostaglandin J2 (15d-PGJ(2)-G). The polypeptide is Phosphatidylserine lipase ABHD16A (Mus musculus (Mouse)).